Here is a 379-residue protein sequence, read N- to C-terminus: Cytochrome b (379 aa).

A run of 4 helical transmembrane segments spans residues 33 to 53 (FGSL…FLAM), 77 to 98 (WLIR…SIHA), 113 to 133 (WNIG…GYVL), and 178 to 198 (FFAF…VHLL). Histidine 83 and histidine 97 together coordinate heme b. Residues histidine 182 and histidine 196 each contribute to the heme b site. Histidine 201 contacts a ubiquinone. The next 4 helical transmembrane spans lie at 226 to 246 (IKDL…ALFF), 288 to 308 (LGGV…PLLN), 320 to 340 (ITQT…WIGG), and 347 to 367 (FTMI…ILMP).

This sequence belongs to the cytochrome b family. The cytochrome bc1 complex contains 11 subunits: 3 respiratory subunits (MT-CYB, CYC1 and UQCRFS1), 2 core proteins (UQCRC1 and UQCRC2) and 6 low-molecular weight proteins (UQCRH/QCR6, UQCRB/QCR7, UQCRQ/QCR8, UQCR10/QCR9, UQCR11/QCR10 and a cleavage product of UQCRFS1). This cytochrome bc1 complex then forms a dimer. The cofactor is heme b.

The protein localises to the mitochondrion inner membrane. Functionally, component of the ubiquinol-cytochrome c reductase complex (complex III or cytochrome b-c1 complex) that is part of the mitochondrial respiratory chain. The b-c1 complex mediates electron transfer from ubiquinol to cytochrome c. Contributes to the generation of a proton gradient across the mitochondrial membrane that is then used for ATP synthesis. In Thaptomys nigrita (Blackish grass mouse), this protein is Cytochrome b (MT-CYB).